The following is a 498-amino-acid chain: Lysine--tRNA ligase (498 aa).

The Mg(2+) site is built by Glu408 and Glu415.

The protein belongs to the class-II aminoacyl-tRNA synthetase family. In terms of assembly, homodimer. Mg(2+) is required as a cofactor.

The protein localises to the cytoplasm. The enzyme catalyses tRNA(Lys) + L-lysine + ATP = L-lysyl-tRNA(Lys) + AMP + diphosphate. The protein is Lysine--tRNA ligase of Listeria monocytogenes serovar 1/2a (strain ATCC BAA-679 / EGD-e).